Here is a 299-residue protein sequence, read N- to C-terminus: Probable lipid kinase YegS (299 aa).

Residues 2 to 133 (ANFPASLLIL…IDMARVNDKT (132 aa)) form the DAGKc domain. ATP is bound by residues T40, 66 to 72 (GDGTINE), and T95. Residues L215, D218, and L220 each coordinate Mg(2+). Catalysis depends on E271, which acts as the Proton acceptor.

This sequence belongs to the diacylglycerol/lipid kinase family. YegS lipid kinase subfamily. Mg(2+) is required as a cofactor. The cofactor is Ca(2+).

The protein localises to the cytoplasm. Functionally, probably phosphorylates lipids; the in vivo substrate is unknown. In Salmonella gallinarum (strain 287/91 / NCTC 13346), this protein is Probable lipid kinase YegS.